The sequence spans 349 residues: Cobalt-precorrin-5B C(1)-methyltransferase (349 aa).

Belongs to the CbiD family.

It catalyses the reaction Co-precorrin-5B + S-adenosyl-L-methionine = Co-precorrin-6A + S-adenosyl-L-homocysteine. It functions in the pathway cofactor biosynthesis; adenosylcobalamin biosynthesis; cob(II)yrinate a,c-diamide from sirohydrochlorin (anaerobic route): step 6/10. Functionally, catalyzes the methylation of C-1 in cobalt-precorrin-5B to form cobalt-precorrin-6A. The chain is Cobalt-precorrin-5B C(1)-methyltransferase from Saccharolobus islandicus (strain Y.N.15.51 / Yellowstone #2) (Sulfolobus islandicus).